Here is a 798-residue protein sequence, read N- to C-terminus: Pentatricopeptide repeat-containing protein At5g67570, chloroplastic (798 aa).

Disordered stretches follow at residues methionine 1 to proline 21 and isoleucine 50 to lysine 73. 10 PPR repeats span residues serine 254–aspartate 284, aspartate 290–leucine 324, aspartate 340–proline 374, asparagine 375–proline 409, lysine 410–glycine 444, threonine 445–proline 480, leucine 481–lysine 511, asparagine 515–arginine 545, asparagine 553–methionine 587, and aspartate 588–proline 622.

This sequence belongs to the PPR family. P subfamily. In terms of assembly, interacts (via C-terminus) with SIGF (via N-terminus).

It localises to the plastid. Its subcellular location is the chloroplast. Involved in the regulation of early chloroplast development and chloroplast gene expression in a SIGF-dependent manner. The sequence is that of Pentatricopeptide repeat-containing protein At5g67570, chloroplastic (DG1) from Arabidopsis thaliana (Mouse-ear cress).